The sequence spans 144 residues: Dynein light chain Tctex-type protein 2B (144 aa).

The protein belongs to the dynein light chain Tctex-type family. In terms of assembly, light chain of the cytoplasmic dynein complex 2, a multisubunit complex composed at least of eleven different proteins. The cytoplasmic dynein 2 complex consists of two catalytic heavy chains (HCs) and a number of non-catalytic subunits presented by intermediate chains (ICs), light intermediate chains (LICs) and light chains (LCs). Among them, a heavy chain (DYNC2H1), two intermediate chains (DYNC2I2 and DYNC2I1), a light intermediate chain (DYNC2LI1), and a light chain (DYNLT2B) are unique to the dynein-2 complex, but a subset of the light chains are also shared by dynein-1 and dynein-2 complexes. The dimer DYNLT2B-DYNLT1/DYNLT3 interacts with DYNC2I1; this interaction is crucial for retrograde trafficking of ciliary proteins.

The protein resides in the dynein axonemal particle. In terms of biological role, acts as one of several non-catalytic accessory components of the cytoplasmic dynein 2 complex (dynein-2 complex), a motor protein complex that drives the movement of cargos along microtubules within cilia and flagella in concert with the intraflagellar transport (IFT) system. Required for proper retrograde ciliary transport. This is Dynein light chain Tctex-type protein 2B (Dynlt2b) from Mus musculus (Mouse).